Reading from the N-terminus, the 87-residue chain is Small ribosomal subunit protein bS20 (87 aa).

The protein belongs to the bacterial ribosomal protein bS20 family.

In terms of biological role, binds directly to 16S ribosomal RNA. This chain is Small ribosomal subunit protein bS20, found in Halothermothrix orenii (strain H 168 / OCM 544 / DSM 9562).